A 662-amino-acid polypeptide reads, in one-letter code: MKTPSLTGPVFFTTPKFARLRFAFKLSFAIVLSLFLGFHLQLETPRWSVLTAAIVAAGPAFAAGGEPFSGAIRHRGMLRVVGTFIGCIGALIIIIATVRAPVVMLMLCCIWAGLCTWVSSLVKVENAYVFGLAGYTTLIIIVSTQGTPLLTPQFAVERCSEIVLGIVCAILADLLFSPRSIKQDVDRSMGELLVDQYRLLQLSMSGAEKETIDAAWHALVRKTTALSGMRSSLMLESSRWQNSNRRLTSLHTQSLTMITQACETYLVLQDAPTPVKSSLKLVLDQPVESFRDVHCRVKALRHLIAADSRDVPPTLVSWVGAATRYLLLAKGVQTNGRITTIEADVLNSEVEIKAPSAETHHAMINGLRTGVATALGCLFWLSTGWTSGSVCMVMIAVVTSLAMRLPNPQMMAKDFLFGTIYALPLGALMFMFIMPSTQQSMLLLCLSLGAMAFFLGLEVQKRRLGSLGALASTINILVLDNPMTFHISQFLDSAIGQIIGCFLALMVILLIRDNTKAHTGRTLLNRFVYGAVSALTTNTTRRKENHLPALYQQLFLLLNRFPDDIAKYRLALWLIIMHQRLRTLDIPQNAALSAFHRQIRATAEQVILARRDTTRSRYFTQLLGELERYQQMLTEQQLPASVTAPVGRLTGILRDYQHALSN.

A run of 11 helical transmembrane segments spans residues 22 to 42 (FAFKLSFAIVLSLFLGFHLQL), 52 to 72 (AAIVAAGPAFAAGGEPFSGAI), 76 to 96 (GMLRVVGTFIGCIGALIIIIA), 102 to 122 (VVMLMLCCIWAGLCTWVSSLV), 129 to 149 (VFGLAGYTTLIIIVSTQGTPL), 161 to 181 (EIVLGIVCAILADLLFSPRSI), 378 to 398 (LFWLSTGWTSGSVCMVMIAVV), 415 to 435 (FLFGTIYALPLGALMFMFIMP), 439 to 459 (QSMLLLCLSLGAMAFFLGLEV), 467 to 487 (LGALASTINILVLDNPMTFHI), and 491 to 511 (LDSAIGQIIGCFLALMVILLI).

It belongs to the aromatic acid exporter ArAE (TC 2.A.85) family.

It localises to the cell inner membrane. Forms an efflux pump with AaeA. Could function as a metabolic relief valve, allowing to eliminate certain compounds when they accumulate to high levels in the cell. In Pectobacterium carotovorum subsp. carotovorum (strain PC1), this protein is p-hydroxybenzoic acid efflux pump subunit AaeB.